A 211-amino-acid chain; its full sequence is 3,4-dihydroxy-2-butanone 4-phosphate synthase (211 aa).

D-ribulose 5-phosphate is bound by residues Arg-37 to Glu-38, Asp-42, Arg-150 to Thr-154, and Glu-174. Glu-38 serves as a coordination point for Mg(2+). His-153 is a Mg(2+) binding site.

This sequence belongs to the DHBP synthase family. As to quaternary structure, homodimer. It depends on Mg(2+) as a cofactor. Requires Mn(2+) as cofactor.

It carries out the reaction D-ribulose 5-phosphate = (2S)-2-hydroxy-3-oxobutyl phosphate + formate + H(+). It participates in cofactor biosynthesis; riboflavin biosynthesis; 2-hydroxy-3-oxobutyl phosphate from D-ribulose 5-phosphate: step 1/1. Functionally, catalyzes the conversion of D-ribulose 5-phosphate to formate and 3,4-dihydroxy-2-butanone 4-phosphate. This is 3,4-dihydroxy-2-butanone 4-phosphate synthase from Buchnera aphidicola subsp. Baizongia pistaciae (strain Bp).